Here is a 253-residue protein sequence, read N- to C-terminus: Ribosomal RNA small subunit methyltransferase G (253 aa).

S-adenosyl-L-methionine contacts are provided by residues G84, F89, 135–136 (AE), and R154. A disordered region spans residues 228 to 253 (TPAKYPRREGVPTHQPLFWKAKEQSR).

The protein belongs to the methyltransferase superfamily. RNA methyltransferase RsmG family.

Its subcellular location is the cytoplasm. Specifically methylates the N7 position of a guanine in 16S rRNA. This Deinococcus radiodurans (strain ATCC 13939 / DSM 20539 / JCM 16871 / CCUG 27074 / LMG 4051 / NBRC 15346 / NCIMB 9279 / VKM B-1422 / R1) protein is Ribosomal RNA small subunit methyltransferase G.